Consider the following 277-residue polypeptide: Phosphoenolpyruvate synthase regulatory protein (277 aa).

Gly157–Thr164 serves as a coordination point for ADP.

Belongs to the pyruvate, phosphate/water dikinase regulatory protein family. PSRP subfamily.

The catalysed reaction is [pyruvate, water dikinase] + ADP = [pyruvate, water dikinase]-phosphate + AMP + H(+). It catalyses the reaction [pyruvate, water dikinase]-phosphate + phosphate + H(+) = [pyruvate, water dikinase] + diphosphate. Its function is as follows. Bifunctional serine/threonine kinase and phosphorylase involved in the regulation of the phosphoenolpyruvate synthase (PEPS) by catalyzing its phosphorylation/dephosphorylation. This chain is Phosphoenolpyruvate synthase regulatory protein, found in Escherichia coli O6:K15:H31 (strain 536 / UPEC).